The chain runs to 334 residues: Protein-glutamate methylesterase/protein-glutamine glutaminase 2 (334 aa).

Positions 2-120 (NIGIVNDLPL…GAAGDTTKLL (119 aa)) constitute a Response regulatory domain. A 4-aspartylphosphate modification is found at Asp53. Positions 134–334 (PGSSRLAGAA…AGELAALARI (201 aa)) constitute a CheB-type methylesterase domain. Residues Ser157, His184, and Asp277 contribute to the active site.

It belongs to the CheB family. In terms of processing, phosphorylated by CheA. Phosphorylation of the N-terminal regulatory domain activates the methylesterase activity.

Its subcellular location is the cytoplasm. It catalyses the reaction [protein]-L-glutamate 5-O-methyl ester + H2O = L-glutamyl-[protein] + methanol + H(+). It carries out the reaction L-glutaminyl-[protein] + H2O = L-glutamyl-[protein] + NH4(+). Functionally, involved in chemotaxis. Part of a chemotaxis signal transduction system that modulates chemotaxis in response to various stimuli. Catalyzes the demethylation of specific methylglutamate residues introduced into the chemoreceptors (methyl-accepting chemotaxis proteins or MCP) by CheR. Also mediates the irreversible deamidation of specific glutamine residues to glutamic acid. This chain is Protein-glutamate methylesterase/protein-glutamine glutaminase 2, found in Burkholderia orbicola (strain AU 1054).